The following is an 879-amino-acid chain: MIIRRIDIENFLSHDRSLIEFKGTVNVIIGHNGAGKSSIIDAISFSLFRKSLRDAKKQEDLIKRGAGRATVTLYLENKGKIYVIKRNAPNQYTSEDTISELTNDTRRTIARGATTVSQKIKELLNLDEEVLKSTIIVGQGKIESVFENLPDVTKKILKIDKIEKLRDSNGPIKEVMDKINNKIIELQSLEKYKNESENQKIQKEKELENIKRELEDLNIKEEKERKKYEDIVKLNEEEEKKEKRYVELISLLNKLKDDISELREEVKDENRLREEKEKLEKDILEKDKLIEEKEKIIEAQNKIKLAQEKEKSLKTIKINLTDLEEKLKRKRELEEDYKKYIEIKGELEELEEKERKFNSLSDRLKSLKIKLSEIESKISNRKISINIEELDKELQKLNEDLNNKNQEREKLASQLGEIKGRIEELNKLLGNLNQVKGNVCPVCGRELSDDHKRKIQNEIIEKLKELDELNKKFKLEINKINGLISELNQIINKKSKEKDIAIRNLADYNNLLTQQQELRKEIEEIENEIERLSIYHEKYIRLKEEEKNLKPKYEEYLKYYDVTEEKIRELERQKIELEKEIEEIMNKVREYYNTDLTQKIRDIEKRIQEIKGKENKLRELDTLLAKIETAKQKIKQNEEEIKKLTDELQLLNFDPNRFQQIKREKEVLEKILGEINSKKGELLGKKEVLENDIKRLEEQIKDYEEKLKNKQKLITAYDKLKKLREHLAEDKLQAYLMNTVKSLVEDSLNSILSRFELSFTRVEVDFNDKNGIYAYTTSGQRLPVNLLSGGERVSIALALRLAIAKSLMNEVGFLILDEPTVNLDEYRKKELIDIIRSTVEVVPQIIVVTHDEELLQAGDYIIRLEKRGDSSKVEVINND.

ATP-binding positions include 32 to 38 (NGAGKSS) and glutamine 139. Coiled-coil stretches lie at residues 184–304 (IELQ…NKIK) and 342–436 (EIKG…NQVK). A Zinc-hook domain is found at 394 to 492 (LQKLNEDLNN…LISELNQIIN (99 aa)). 2 residues coordinate Zn(2+): cysteine 440 and cysteine 443. Residues 502–722 (IRNLADYNNL…LITAYDKLKK (221 aa)) are a coiled coil. ATP is bound at residue 786–791 (LLSGGE).

This sequence belongs to the SMC family. RAD50 subfamily. As to quaternary structure, homodimer. Forms a heterotetramer composed of two Mre11 subunits and two Rad50 subunits. Zn(2+) serves as cofactor.

Its function is as follows. Part of the Rad50/Mre11 complex, which is involved in the early steps of DNA double-strand break (DSB) repair. The complex may facilitate opening of the processed DNA ends to aid in the recruitment of HerA and NurA. Rad50 controls the balance between DNA end bridging and DNA resection via ATP-dependent structural rearrangements of the Rad50/Mre11 complex. This chain is DNA double-strand break repair Rad50 ATPase, found in Sulfurisphaera tokodaii (strain DSM 16993 / JCM 10545 / NBRC 100140 / 7) (Sulfolobus tokodaii).